Reading from the N-terminus, the 618-residue chain is Neurosecretory protein VGF (618 aa).

A signal peptide spans 1 to 23 (MKSLRLPATVLFCLLLLIKGLGA). Disordered regions lie at residues 23-46 (AAPP…PVAG), 86-201 (VLLQ…LESP), and 219-262 (PERA…GEAL). Residues 26 to 37 (PGHPEAQPPPPS) are compositionally biased toward pro residues. Positions 180–195 (ETAAAETETRTHTLTR) are enriched in low complexity. Residues 301–332 (LAQVEAGRRQAEATRQAAAQEERLADLASDLL) adopt a coiled-coil conformation. The residue at position 310 (Gln310) is a Pyrrolidone carboxylic acid. Residues 342–603 (RQRGLGGRGL…EAEERRLQEQ (262 aa)) are disordered. The span at 356 to 378 (GGGRETARQQEEAEQERRGGEER) shows a compositional bias: basic and acidic residues. Positions 379–395 (VGEEDEEAAEAEAEAEE) are enriched in acidic residues. The segment covering 416-434 (AEDKRSREETPGHRRKEAE) has biased composition (basic and acidic residues). The residue at position 421 (Ser421) is a Phosphoserine. Thr425 is modified (phosphothreonine). Residues 435–451 (GAEEGGAEDEDDDEEMD) show a composition bias toward acidic residues. A compositionally biased stretch (pro residues) spans 490–500 (PPEPVPPPRAA). Over residues 578–602 (HYPDREAQARRAQEEAEAEERRLQE) the composition is skewed to basic and acidic residues.

In terms of processing, multiple peptides are derived from VGF, with activities in synaptic plasticity, antidepression, penile erection, autonomic activation, and increases in energy expenditure.

The protein resides in the secreted. It is found in the cytoplasmic vesicle. Its subcellular location is the secretory vesicle. Secreted polyprotein that is packaged and proteolytically processed by prohormone convertases PCSK1 and PCSK2 in a cell-type-specific manner. VGF and peptides derived from its processing play many roles in neurogenesis and neuroplasticity associated with learning, memory, depression and chronic pain. Its function is as follows. Plays a role in the control of body fluid homeostasis by regulating vasopressin release. Suppresses presynaptic glutamatergic neurons connected to vasopressin neurons. In terms of biological role, plays a role in the control of body fluid homeostasis by regulating vasopressin release. Activates GABAergic interneurons which are inhibitory neurons of the nervous system and thereby suppresses presynaptic glutamatergic neurons. Also stimulates feeding behavior in an orexin-dependent manner in the hypothalamus. Functions as a positive regulator for the activation of orexin neurons resulting in elevated gastric acid secretion and gastric emptying. The sequence is that of Neurosecretory protein VGF from Bos taurus (Bovine).